The chain runs to 311 residues: m7GpppX diphosphatase (311 aa).

Substrate-binding positions include E159, K181, and 242–253; that span reads HYQPSFYHLHVH. The Histidine triad motif signature appears at 249–253; that stretch reads HLHVH. The active-site Nucleophile is H251.

The protein belongs to the HIT family. Expressed in neurons in the ventral cord, the nerve ring and the pharynx.

It localises to the nucleus. It catalyses the reaction a 5'-end (N(7)-methyl 5'-triphosphoguanosine)-ribonucleoside in mRNA + H2O = N(7)-methyl-GMP + a 5'-end diphospho-ribonucleoside in mRNA + 2 H(+). The enzyme catalyses a 5'-end (N(2),N(2),N(7)-trimethyl 5'-triphosphoguanosine)-ribonucleoside in mRNA + H2O = (N(2),N(2),N(7))-trimethyl-GMP + a 5'-end diphospho-ribonucleoside in mRNA + 2 H(+). Its activity is regulated as follows. The hydrolytic product 7-methylguanosine diphosphate (m7GDP) efficiently inhibits the decapping scavenger activity and acts as a competitive inhibitor in vitro. Decapping scavenger enzyme that catalyzes the cleavage of a residual cap structure following the degradation of mRNAs of the 3'-&gt;5' exosome-mediated mRNA decay pathway. Hydrolyzes cap analog structures like 7-methylguanosine nucleoside triphosphate (m7GpppG) and tri-methyl guanosine nucleoside triphosphate (m3(2,2,7)GpppG) with up to 2 nucleotide substrates (small capped oligoribonucleotides) and specifically releases 5'-phosphorylated RNA fragments and 7-methylguanosine monophosphate (m7GMP). Does not hydrolyze unmethylated cap analog (GpppG) and shows no decapping activity on intact m7GpppG-capped mRNA molecules. Does not hydrolyze 7-methylguanosine diphosphate (m7GDP) and tri-methylguanosine diphosphate (m3(2,2,7)GDP) to m(7)GMP and m3(2,2,7)GMP, respectively. May also play a role in the 5'-&gt;3 mRNA decay pathway; m7GDP, the downstream product released by the 5'-&gt;3' mRNA mediated decapping activity, may be also converted by dcs-1 to m7GMP. Binds to m7GpppG and strongly to m7GDP. The sequence is that of m7GpppX diphosphatase (dcs-1) from Caenorhabditis elegans.